Here is a 305-residue protein sequence, read N- to C-terminus: Fumarylacetoacetate hydrolase domain-containing protein 2 homolog (305 aa).

Residues Glu-141, Glu-143, and Asp-172 each coordinate a divalent metal cation.

It belongs to the FAH family. It depends on Ca(2+) as a cofactor. Mg(2+) serves as cofactor.

In terms of biological role, may have hydrolase activity. The sequence is that of Fumarylacetoacetate hydrolase domain-containing protein 2 homolog (fahd2) from Dictyostelium discoideum (Social amoeba).